The chain runs to 64 residues: DNA-binding protein 7a (64 aa).

Belongs to the 7 kDa DNA-binding/endoribonuclease P2 family. Monomer.

The protein resides in the cytoplasm. Its function is as follows. Can constrain negative DNA supercoils. May be involved in maintaining the integrity of the genome at high temperature. This chain is DNA-binding protein 7a, found in Saccharolobus islandicus (strain L.D.8.5 / Lassen #2) (Sulfolobus islandicus).